The following is a 156-amino-acid chain: MKIVEGNLSVDKSKKVAIINARFNHFITDRLVEGAKDAYARHGGNPEELDLILVPGAFEIPFALDKALASGKYDAVCCLGAVIRGATPHFDYVSAEATKGVANVTLKYGKPATFGVLTVDSIEQAIERAGTKAGNKGAEAMAGLIELINLYGSLEK.

Residues Phe-23, 57-59 (AFE), and 81-83 (AVI) each bind 5-amino-6-(D-ribitylamino)uracil. (2S)-2-hydroxy-3-oxobutyl phosphate is bound at residue 86–87 (AT). His-89 acts as the Proton donor in catalysis. 5-amino-6-(D-ribitylamino)uracil is bound at residue Phe-114. A (2S)-2-hydroxy-3-oxobutyl phosphate-binding site is contributed by Arg-128.

This sequence belongs to the DMRL synthase family.

The enzyme catalyses (2S)-2-hydroxy-3-oxobutyl phosphate + 5-amino-6-(D-ribitylamino)uracil = 6,7-dimethyl-8-(1-D-ribityl)lumazine + phosphate + 2 H2O + H(+). It functions in the pathway cofactor biosynthesis; riboflavin biosynthesis; riboflavin from 2-hydroxy-3-oxobutyl phosphate and 5-amino-6-(D-ribitylamino)uracil: step 1/2. Catalyzes the formation of 6,7-dimethyl-8-ribityllumazine by condensation of 5-amino-6-(D-ribitylamino)uracil with 3,4-dihydroxy-2-butanone 4-phosphate. This is the penultimate step in the biosynthesis of riboflavin. This Sulfurovum sp. (strain NBC37-1) protein is 6,7-dimethyl-8-ribityllumazine synthase.